The following is a 729-amino-acid chain: MDEPLFSCVLPCAKGSEQVLQQEAEQLGVQTLSIAPAVVRGKASLLTFYRLCLWSRTASRVLLVLAHENVDSAEAIYEVARNIAWEDHIAPDDTFAVRFNGLGCGIRNTQFGALKIKDAVVDRLRDIVKRRPDVDAKTPDILLDAHLHKNELTLALDLSGGSLHERGYRQAHGAAPMKETLAATLLYRARWHEFCAQPATLIDPTCGAGTLVLEAAMMAADYAPNLQRQHWGFTRWQNHRPALWNKVIDEAQTRKNAGIAALSDYVFYGYDQNPVVIAAARANAKRLGLEDFVHFAPKRLEDLTADFGARGFVVANPPYGERLGEVQELIPTYAALGHWFKTLPADWEMAVIASNDALLKRMRLRAHKYYQAFNGTIAAQIVHYRRSEQPESQETAAQQKLAQASVGISEQAQMFANRLQKNIQKIRPSAERAQTDAYRIYDQDMPEYAVAIDCYGDAVVIQEYAPPKTIDPQKAQQRLFDVLQVVPEVLALDERSVFLKTRQRQTGKTQYNPAAEKRNEERIVYEGAARFLVNLSDYLDTGLFLDHRPMRRLLFEQAAGKRVLNLFCYTATASVQAALGGASYTTSVDLSPTYLDWAQRNFDLNALSDRHRLQRADVMAWLHSGKSQFDMIFCDPPTFSNTKKEQRVFDVQRDQIALIDGCMQRLAAGGILYFSNNYRGFRLEEALCARYCVQEISENTIDFDFKRRPKIHRVWKIMHRSDGEQSAEK.

A THUMP domain is found at Thr-47 to Leu-158.

It belongs to the methyltransferase superfamily. RlmKL family.

It is found in the cytoplasm. The enzyme catalyses guanosine(2445) in 23S rRNA + S-adenosyl-L-methionine = N(2)-methylguanosine(2445) in 23S rRNA + S-adenosyl-L-homocysteine + H(+). It catalyses the reaction guanosine(2069) in 23S rRNA + S-adenosyl-L-methionine = N(2)-methylguanosine(2069) in 23S rRNA + S-adenosyl-L-homocysteine + H(+). In terms of biological role, specifically methylates the guanine in position 2445 (m2G2445) and the guanine in position 2069 (m7G2069) of 23S rRNA. The polypeptide is Ribosomal RNA large subunit methyltransferase K/L (Dichelobacter nodosus (strain VCS1703A)).